A 465-amino-acid chain; its full sequence is MAGGKQFTFSYENEVCKQDYFIKSPPSQLFSSVTSWKKRFFILSKAGEKSFSLSYYKDHHHRGSIEIDQNSSVEVGISSQEKMQSVQKMFKCHPDEVMSIRTTNREYFLIGHDREKIKDWVSFMSSFRQDIKATQQNTEEELSLGNKRTLFYSSPLLGPSSTSEAVGSSSPRNGLQDKHLMEQSSPGFRQTHLQDLSEATQDVKEENHYLTPRSVLLELDNIIASSDSGESIETDGPDQVSGRIECHYEPMESYFFKETSHESVDSSKEEPQTLPETQDGDLHLQEQGSGIDWCLSPADVEAQTTNDQKGNIPDESQVEKLNVFLSPPDVINYLALTEATGRICVSQWEGPPRLGCIFCHGDHLLAVNDLKPQSLEEVSLFLTRSIQKEDSFRILSYQVAFGEGTELRDRAPGFRTSDRHDVAKRACMESDWCRDSKTAPSTNLCLSFLFCKIMTNDGAGCWIIK.

A PH domain is found at 14 to 129 (EVCKQDYFIK…WVSFMSSFRQ (116 aa)). Over residues 159-173 (PSSTSEAVGSSSPRN) the composition is skewed to polar residues. 2 disordered regions span residues 159–179 (PSST…QDKH) and 258–283 (ETSH…GDLH). A compositionally biased stretch (basic and acidic residues) spans 258 to 271 (ETSHESVDSSKEEP).

This chain is Pleckstrin homology domain-containing family S member 1, found in Homo sapiens (Human).